A 424-amino-acid polypeptide reads, in one-letter code: Folate-like transporter 2 (424 aa).

N-linked (GlcNAc...) asparagine glycosylation is present at Asn35. The next 6 membrane-spanning stretches (helical) occupy residues 48–68 (IWTY…DVFL), 71–91 (PLLV…VFGK), 99–119 (LEVF…YIYV), 136–156 (ALLV…GLNW), 164–184 (IISL…PGVE), and 233–253 (PLIL…YQVT). An N-linked (GlcNAc...) asparagine glycan is attached at Asn254. Helical transmembrane passes span 299–319 (WGDL…FWMS), 324–344 (IVVL…TTTI), 361–381 (LFGI…AVVI), and 392–412 (FVVY…IFGI).

This sequence belongs to the reduced folate carrier (RFC) transporter (TC 2.A.48) family.

The protein localises to the membrane. Unlike folt-1, does not appear to act as a folate transporter. In Caenorhabditis elegans, this protein is Folate-like transporter 2 (folt-2).